An 890-amino-acid polypeptide reads, in one-letter code: Translation initiation factor IF-2 (890 aa).

Disordered stretches follow at residues 31 to 164 (KLAQ…PAEP) and 189 to 266 (FKAP…ESLK). Residues 42–54 (SSSEKPSAKEKSV) are compositionally biased toward basic and acidic residues. Residues 55-72 (KVALAATSTPTASAEQAS) show a composition bias toward low complexity. Residues 114-128 (PEPELEVVDEVCDES) are compositionally biased toward acidic residues. Basic and acidic residues-rich tracts occupy residues 149–163 (PQEKELEPKPVKPAE) and 242–266 (PKRDAGKKNLTDFRDRSKKSDESLK). The 170-residue stretch at 395–564 (IRSPIVAFMG…ALQAEVLELK (170 aa)) folds into the tr-type G domain. Residues 404 to 411 (GHVDHGKT) form a G1 region. 404–411 (GHVDHGKT) serves as a coordination point for GTP. The G2 stretch occupies residues 429 to 433 (AITQH). The tract at residues 450-453 (DTPG) is G3. GTP is bound by residues 450 to 454 (DTPGH) and 504 to 507 (NKCD). Residues 504–507 (NKCD) form a G4 region. The tract at residues 540 to 542 (SAK) is G5.

The protein belongs to the TRAFAC class translation factor GTPase superfamily. Classic translation factor GTPase family. IF-2 subfamily.

Its subcellular location is the cytoplasm. In terms of biological role, one of the essential components for the initiation of protein synthesis. Protects formylmethionyl-tRNA from spontaneous hydrolysis and promotes its binding to the 30S ribosomal subunits. Also involved in the hydrolysis of GTP during the formation of the 70S ribosomal complex. This Chlamydia pneumoniae (Chlamydophila pneumoniae) protein is Translation initiation factor IF-2 (infB).